We begin with the raw amino-acid sequence, 953 residues long: Probable isoleucine--tRNA ligase, cytoplasmic (953 aa).

A 'HIGH' region motif is present at residues 45–55; sequence PFATGLPHYGH. The short motif at 634 to 638 is the 'KMSKS' region element; that stretch reads KMSKR. Residue Lys-637 coordinates ATP.

Belongs to the class-I aminoacyl-tRNA synthetase family.

The protein localises to the cytoplasm. The enzyme catalyses tRNA(Ile) + L-isoleucine + ATP = L-isoleucyl-tRNA(Ile) + AMP + diphosphate. This Enterocytozoon bieneusi (strain H348) (Microsporidian parasite) protein is Probable isoleucine--tRNA ligase, cytoplasmic.